The primary structure comprises 162 residues: Retinoic acid receptor responder protein 2 (162 aa).

An N-terminal signal peptide occupies residues 1 to 20 (MWQLLLPLALGLGTMGLGRA). 3 cysteine pairs are disulfide-bonded: Cys-77–Cys-87, Cys-98–Cys-117, and Cys-101–Cys-135. A propeptide spanning residues 156–162 (FIKALSP) is cleaved from the precursor.

Secreted in an inactive precursor form, prochemerin, which is proteolytically processed by a variety of extracellular proteases to generate forms with differing levels of bioactivity. For example, the removal of five amino acids results in chemerin-157, which exhibits the highest activity, while removal of six amino acids results in chemerin-156 which has slightly less activity. Some proteases are able to cleave at more than one site and chemerin forms may be sequentially processed by different enzymes to modulate activity levels. The coordinated expression and activity of chemerin-modifying enzymes is essential for regulating its bioactivation, inactivation and, consequently, biological function. Cathepsin G cleaves six C-terminal amino acids from prochemerin (chemerin-156), elastase is able to cleave five (chemerin-157), seven (chemerin-155) or ten (chemerin-152), plasmin cleaves four amino acids (chemerin-158), and tryptase cleaves four (chemerin-158) or seven (chemerin-155). Multiple cleavages might be required to fully activate chemerin, with an initial tryptase cleavage resulting in chemerin with low activity (chemerin-158), and a second cleavage by carboxypeptidase N or B producing highly active chemerin (chemerin-157).

The protein localises to the secreted. Adipocyte-secreted protein (adipokine) that regulates adipogenesis, metabolism and inflammation through activation of the chemokine-like receptor 1 (CMKLR1). Also acts as a ligand for CMKLR2. Can also bind to C-C chemokine receptor-like 2 (CCRL2), but with a lower affinity than it does to CMKLR1 or CMKLR2. Positively regulates adipocyte differentiation, modulates the expression of adipocyte genes involved in lipid and glucose metabolism and might play a role in angiogenesis, a process essential for the expansion of white adipose tissue. Also acts as a pro-inflammatory adipokine, causing an increase in secretion of pro-inflammatory and prodiabetic adipokines, which further impair adipose tissue metabolic function and have negative systemic effects including impaired insulin sensitivity, altered glucose and lipid metabolism, and a decrease in vascular function in other tissues. Can have both pro- and anti-inflammatory properties depending on the modality of enzymatic cleavage by different classes of proteases. Acts as a chemotactic factor for leukocyte populations expressing CMKLR1, particularly immature plasmacytoid dendritic cells, but also immature myeloid DCs, macrophages and natural killer cells. Exerts an anti-inflammatory role by preventing TNF/TNFA-induced VCAM1 expression and monocytes adhesion in vascular endothelial cells. The effect is mediated via inhibiting activation of NF-kappa-B and CRK/p38 through stimulation of AKT1/NOS3 signaling and nitric oxide production. Exhibits an antimicrobial function in the skin. The protein is Retinoic acid receptor responder protein 2 (RARRES2) of Bos taurus (Bovine).